Here is a 147-residue protein sequence, read N- to C-terminus: Ubiquitin-conjugating enzyme E2-16 kDa (147 aa).

Positions 1–147 (MAFKRINKEL…AREWTRKYAI (147 aa)) constitute a UBC core domain. Catalysis depends on cysteine 107, which acts as the Glycyl thioester intermediate.

The protein belongs to the ubiquitin-conjugating enzyme family.

It catalyses the reaction S-ubiquitinyl-[E1 ubiquitin-activating enzyme]-L-cysteine + [E2 ubiquitin-conjugating enzyme]-L-cysteine = [E1 ubiquitin-activating enzyme]-L-cysteine + S-ubiquitinyl-[E2 ubiquitin-conjugating enzyme]-L-cysteine.. Its pathway is protein modification; protein ubiquitination. In terms of biological role, catalyzes the covalent attachment of ubiquitin to other proteins. May also mediate selective proteolysis pathways. This chain is Ubiquitin-conjugating enzyme E2-16 kDa (UBC1), found in Colletotrichum gloeosporioides (Anthracnose fungus).